A 117-amino-acid chain; its full sequence is NADH-ubiquinone oxidoreductase chain 3 (117 aa).

3 consecutive transmembrane segments (helical) span residues 1-21 (MKFI…LLLL), 58-78 (FLMT…LPII), and 86-106 (TMIS…TLIL).

It belongs to the complex I subunit 3 family.

It is found in the mitochondrion membrane. The enzyme catalyses a ubiquinone + NADH + 5 H(+)(in) = a ubiquinol + NAD(+) + 4 H(+)(out). Functionally, core subunit of the mitochondrial membrane respiratory chain NADH dehydrogenase (Complex I) that is believed to belong to the minimal assembly required for catalysis. Complex I functions in the transfer of electrons from NADH to the respiratory chain. The immediate electron acceptor for the enzyme is believed to be ubiquinone. The polypeptide is NADH-ubiquinone oxidoreductase chain 3 (ND3) (Apis mellifera ligustica (Common honeybee)).